The primary structure comprises 186 residues: Mitochondrial import inner membrane translocase subunit Tim22 (186 aa).

Cystine bridges form between Cys61/Cys133 and Cys152/Cys171. 3 consecutive transmembrane segments (helical) span residues 66–86 (ALACVGGFVLGGAFGVFTAGI), 117–135 (YAKNFAIVGAMFSCTECLV), and 162–182 (AGLKAGALGCGGFAAFSAVID).

It belongs to the Tim17/Tim22/Tim23 family. In terms of assembly, core component of the TIM22 complex.

The protein resides in the mitochondrion inner membrane. In terms of biological role, essential core component of the TIM22 complex, a complex that mediates the import and insertion of multi-pass transmembrane proteins into the mitochondrial inner membrane. In the TIM22 complex, it constitutes the voltage-activated and signal-gated channel. Forms a twin-pore translocase that uses the membrane potential as external driving force in 2 voltage-dependent steps. The protein is Mitochondrial import inner membrane translocase subunit Tim22 (timm22) of Xenopus tropicalis (Western clawed frog).